The chain runs to 237 residues: Phosphoribosylaminoimidazole-succinocarboxamide synthase (237 aa).

Belongs to the SAICAR synthetase family.

The catalysed reaction is 5-amino-1-(5-phospho-D-ribosyl)imidazole-4-carboxylate + L-aspartate + ATP = (2S)-2-[5-amino-1-(5-phospho-beta-D-ribosyl)imidazole-4-carboxamido]succinate + ADP + phosphate + 2 H(+). It participates in purine metabolism; IMP biosynthesis via de novo pathway; 5-amino-1-(5-phospho-D-ribosyl)imidazole-4-carboxamide from 5-amino-1-(5-phospho-D-ribosyl)imidazole-4-carboxylate: step 1/2. The sequence is that of Phosphoribosylaminoimidazole-succinocarboxamide synthase from Citrobacter koseri (strain ATCC BAA-895 / CDC 4225-83 / SGSC4696).